Reading from the N-terminus, the 512-residue chain is SNF1-related protein kinase catalytic subunit alpha KIN11 (512 aa).

Residues 20–272 (YKLGKTLGIG…IPEIRQHRWF (253 aa)) form the Protein kinase domain. Residues 26–34 (LGIGSFGKV) and lysine 49 contribute to the ATP site. Residue aspartate 143 is the Proton acceptor of the active site. Position 165 is a phosphoserine (serine 165). Threonine 176 carries the post-translational modification Phosphothreonine; by GRIK1 or GRIK2. The segment at 291-391 (AKKINEEIVQ…GARSQVPVDR (101 aa)) is auto-inhibitory domain (AID). Positions 293–333 (KINEEIVQEVVNMGFDRNQVLESLRNRTQNDATVTYYLLLD) constitute a UBA domain. The segment at 295–512 (NEEIVQEVVN…AAFLTELRVI (218 aa)) is regulatory domain (RD). The tract at residues 392–512 (KWALGLQSHA…AAFLTELRVI (121 aa)) is PPI. Positions 399 to 512 (SHAHPREIMN…AAFLTELRVI (114 aa)) are interaction with PAD1 and SKP1. The 49-residue stretch at 463–511 (AMTSPTVIKFELQLYKAREEKYLLDIQRVNGPQFLFLDLCAAFLTELRV) folds into the KA1 domain.

Belongs to the protein kinase superfamily. CAMK Ser/Thr protein kinase family. SNF1 subfamily. Subunit of a probable heterotrimeric complex consisting of an alpha catalytic (KIN10 or KIN11) subunit, and a beta (KINB) and a gamma (KING or SNF4) non-catalytic regulatory subunits. Interacts with KINB2, KINB3, SNF4 and probably with KINB1 and KING1. Interacts with SKP1/ASK1, PAD1 and the N-terminus of PRL1. Potential subunit of a SCF ubiquitin ligase complex consisting of a SNF1-related protein kinase, SKP1 and CUL1. The association of the SCF complex with the proteasome may be mediated by PAD1 and seems to be inhibited by the interaction with PRL1. Interacts with DSP4. Interacts with the begomovirus AL2 protein and the curtovirus L2 protein. Interacts with ATAF1. Interacts with CIPK14. Interacts with FLZ proteins through their FLZ-type zinc finger domains. Interacts with GEBP/STKR1. Interacts with REM4.1 and REM4.2. Interacts with ADK2. Interacts with IDD8. Interacts with FLZ3, FLZ9, TCP3, TCP13, HB21/ZHD3 and HB23/ZHD10. Interacts with WRI1. Interacts with IPK2b. Interacts with FLZ6 and FLZ10. Sumoylated by SIZ1. Post-translationally, phosphorylated at Thr-176 under submergence. Autophosphorylated. Phosphorylated at Thr-176 by GRIK1/SNAK2 and GRIK2/SNAK1. In terms of tissue distribution, expressed in roots, shoots, flower buds, flowers, siliques and leaves. Restrictly expressed to the base of the leaf, the vascular tissue, and the hydathodes.

It localises to the plastid. The protein resides in the chloroplast. The protein localises to the cytoplasm. It is found in the endoplasmic reticulum. It catalyses the reaction L-seryl-[protein] + ATP = O-phospho-L-seryl-[protein] + ADP + H(+). The enzyme catalyses L-threonyl-[protein] + ATP = O-phospho-L-threonyl-[protein] + ADP + H(+). Inactivated by the begomovirus AL2 protein or the curtovirus L2 protein. Activated by phosphorylation at Thr-176 by GRIK1/SNAK2 and GRIK2/SNAK1. Inhibited by trehalose-6-phosphate. Its function is as follows. Catalytic subunit of the probable trimeric SNF1-related protein kinase (SnRK) complex, a central regulator of cellular energy homeostasis, which, in response to seemingly unrelated darkness, sugar and stress conditions, activates energy-producing pathways and inhibits energy-consuming processes. May play a role in a signal transduction cascade regulating gene expression and carbohydrate metabolism in higher plants. The SnRK complex may also be involved in the regulation of fatty acid synthesis by phosphorylation of acetyl-CoA carboxylase and in assimilation of nitrogen by phosphorylating nitrate reductase. In vitro, KIN11 exhibits kinase activity on sucrose phosphate synthase and the kinase activity is inhibited by PRL1. May be a subunit of a SCF ubiquitin ligase complex and thus be involved in proteasomal ubiquitination. Involved in innate antiviral defenses. Phosphorylates REM4.1 in vitro. Phosphorylates ADK2 in vitro. This chain is SNF1-related protein kinase catalytic subunit alpha KIN11, found in Arabidopsis thaliana (Mouse-ear cress).